A 364-amino-acid polypeptide reads, in one-letter code: DNA replication and repair protein RecF (364 aa).

30 to 37 contacts ATP; it reads GRNAQGKT.

This sequence belongs to the RecF family.

Its subcellular location is the cytoplasm. In terms of biological role, the RecF protein is involved in DNA metabolism; it is required for DNA replication and normal SOS inducibility. RecF binds preferentially to single-stranded, linear DNA. It also seems to bind ATP. In Pelotomaculum thermopropionicum (strain DSM 13744 / JCM 10971 / SI), this protein is DNA replication and repair protein RecF.